The chain runs to 215 residues: ATP-dependent Clp protease proteolytic subunit (215 aa).

Ser-111 functions as the Nucleophile in the catalytic mechanism. His-136 is an active-site residue.

It belongs to the peptidase S14 family. In terms of assembly, fourteen ClpP subunits assemble into 2 heptameric rings which stack back to back to give a disk-like structure with a central cavity, resembling the structure of eukaryotic proteasomes.

The protein localises to the cytoplasm. It carries out the reaction Hydrolysis of proteins to small peptides in the presence of ATP and magnesium. alpha-casein is the usual test substrate. In the absence of ATP, only oligopeptides shorter than five residues are hydrolyzed (such as succinyl-Leu-Tyr-|-NHMec, and Leu-Tyr-Leu-|-Tyr-Trp, in which cleavage of the -Tyr-|-Leu- and -Tyr-|-Trp bonds also occurs).. Cleaves peptides in various proteins in a process that requires ATP hydrolysis. Has a chymotrypsin-like activity. Plays a major role in the degradation of misfolded proteins. This chain is ATP-dependent Clp protease proteolytic subunit, found in Hamiltonella defensa subsp. Acyrthosiphon pisum (strain 5AT).